A 713-amino-acid chain; its full sequence is Probable tRNA (uracil-O(2)-)-methyltransferase (713 aa).

Disordered regions lie at residues 49 to 92 and 480 to 508; these read TLRS…REGT and LHSRQGHPQSRPGGAHAPSAPQTAAHDAG. Serine 76 carries the phosphoserine modification. The segment covering 79 to 89 has biased composition (basic and acidic residues); it reads GEPESGPRASR. Serine 489 is modified (phosphoserine). A C3H1-type zinc finger spans residues 669–698; the sequence is FKTRICWFFAHHPDGCVLPAAQCPFAHGPE.

It belongs to the TRM44 family.

It localises to the cytoplasm. It carries out the reaction uridine(44) in tRNA(Ser) + S-adenosyl-L-methionine = 2'-O-methyluridine(44) in tRNA(Ser) + S-adenosyl-L-homocysteine + H(+). Probable adenosyl-L-methionine (AdoMet)-dependent tRNA (uracil-O(2)-)-methyltransferase. The protein is Probable tRNA (uracil-O(2)-)-methyltransferase (Trmt44) of Mus musculus (Mouse).